The chain runs to 310 residues: Uridine phosphorylase 1 (310 aa).

Phosphate is bound by residues G60, R94, and 138 to 141 (RIGT). Residues 142 to 143 (SG) and 217 to 219 (QGR) contribute to the uridine site.

The protein belongs to the PNP/UDP phosphorylase family. As to quaternary structure, homodimer.

The enzyme catalyses uridine + phosphate = alpha-D-ribose 1-phosphate + uracil. It catalyses the reaction 2'-deoxyuridine + phosphate = 2-deoxy-alpha-D-ribose 1-phosphate + uracil. It participates in pyrimidine metabolism; UMP biosynthesis via salvage pathway; uracil from uridine (phosphorylase route): step 1/1. Functionally, catalyzes the reversible phosphorylytic cleavage of uridine to uracil and ribose-1-phosphate which can then be utilized as carbon and energy sources or in the rescue of pyrimidine bases for nucleotide synthesis. Shows broad substrate specificity and can also accept deoxyuridine and other analogous compounds. The protein is Uridine phosphorylase 1 of Homo sapiens (Human).